A 315-amino-acid polypeptide reads, in one-letter code: HTH-type transcriptional regulator TreR (315 aa).

The 55-residue stretch at 5-59 (LTIKDIARLSGVGKSTVSRVLNNESGVSERTRERVEAVMNQHGFSPSRSARAMRG) folds into the HTH lacI-type domain. Positions 7–26 (IKDIARLSGVGKSTVSRVLN) form a DNA-binding region, H-T-H motif. Alpha,alpha-trehalose 6-phosphate-binding positions include 71-77 (RLDSLSE), Gly126, Arg147, 187-190 (DITT), Arg194, Thr242, and Tyr284.

Homodimer.

In terms of biological role, repressor of the treBC operon. It is able to bind trehalose-6-phosphate. The sequence is that of HTH-type transcriptional regulator TreR (treR) from Salmonella typhimurium (strain LT2 / SGSC1412 / ATCC 700720).